Reading from the N-terminus, the 310-residue chain is Calbindin-32 (310 aa).

EF-hand domains follow at residues 35–70 (LSAN…FVSS), 84–120 (TMLE…EENF), 131–166 (ESSV…LLKE), 177–212 (KLIE…KENF), 224–259 (LTKE…LLEL), and 283–304 (TDKH…LAKI). Asp-48, Asp-50, Asn-52, Tyr-54, Glu-59, Asp-98, Asn-100, Asp-102, Lys-104, Glu-109, Asp-144, Asp-146, Ser-148, Tyr-150, Glu-155, Asp-190, Asn-192, Asp-194, Arg-196, Glu-201, Asp-237, Asp-239, Ser-241, Thr-243, and Glu-248 together coordinate Ca(2+).

It belongs to the calbindin family. In terms of tissue distribution, expressed in a large number of neuron of the brain and the thoracic ganglion as well as in two small muscles of the thorax.

In Drosophila melanogaster (Fruit fly), this protein is Calbindin-32 (Cbp53E).